We begin with the raw amino-acid sequence, 353 residues long: MKIDANKEKALNAVLGQIEKQFGKGSIMKLGENRSMDVETISTGSLSLDVALGAGGLPMGRIVEIYGPESSGKTTLTLELIAAAQREGKVCAFIDAEHALDPIYAKKLGVDIDNLLCSQPDTGEQALEICDALTRSGAVDVIVVDSVAALTPKAEIEGEIGDSHMGLAARMMSQAMRKLAGNLKQTNTMLIFINQIRMKIGVMFGNPETTTGGNALKFYASVRLDIRRTGAIKERDEVVGNETRVKVVKNKIAAPFKQAEFQILYGQGINRTGELVDLGVAHKLVEKAGAWYSYKGDKIGQGRANAGKFLLDNPAIAEEIDTALRGMLLASVEPAVESEVGDENVDLETGEIF.

67–74 (GPESSGKT) lines the ATP pocket.

It belongs to the RecA family.

It is found in the cytoplasm. Can catalyze the hydrolysis of ATP in the presence of single-stranded DNA, the ATP-dependent uptake of single-stranded DNA by duplex DNA, and the ATP-dependent hybridization of homologous single-stranded DNAs. It interacts with LexA causing its activation and leading to its autocatalytic cleavage. This chain is Protein RecA, found in Shewanella woodyi (strain ATCC 51908 / MS32).